We begin with the raw amino-acid sequence, 148 residues long: UPF0179 protein Mpal_0949 (148 aa).

This sequence belongs to the UPF0179 family.

This chain is UPF0179 protein Mpal_0949, found in Methanosphaerula palustris (strain ATCC BAA-1556 / DSM 19958 / E1-9c).